A 241-amino-acid polypeptide reads, in one-letter code: Phosphoglycolate phosphatase (241 aa).

D8 (nucleophile) is an active-site residue. The Mg(2+) site is built by D8, D10, and D174.

The protein belongs to the HAD-like hydrolase superfamily. CbbY/CbbZ/Gph/YieH family. Mg(2+) is required as a cofactor.

The catalysed reaction is 2-phosphoglycolate + H2O = glycolate + phosphate. It functions in the pathway organic acid metabolism; glycolate biosynthesis; glycolate from 2-phosphoglycolate: step 1/1. Functionally, specifically catalyzes the dephosphorylation of 2-phosphoglycolate. Is involved in the dissimilation of the intracellular 2-phosphoglycolate formed during the DNA repair of 3'-phosphoglycolate ends, a major class of DNA lesions induced by oxidative stress. The sequence is that of Phosphoglycolate phosphatase from Rhodospirillum rubrum (strain ATCC 11170 / ATH 1.1.1 / DSM 467 / LMG 4362 / NCIMB 8255 / S1).